Consider the following 240-residue polypeptide: uncharacterized protein (240 aa).

The disordered stretch occupies residues 216-240; sequence MKQSKNKPRIRQAVGATRQCRKPQA.

This is an uncharacterized protein from Escherichia coli (strain K12).